We begin with the raw amino-acid sequence, 464 residues long: L-cysteine desulfhydrase-like protein lolT2 (464 aa).

N6-(pyridoxal phosphate)lysine is present on Lys227.

It belongs to the class-V pyridoxal-phosphate-dependent aminotransferase family. Pyridoxal 5'-phosphate serves as cofactor.

It functions in the pathway alkaloid biosynthesis. Functionally, L-cysteine desulfhydrase-like protein; part of the gene cluster that mediates the biosynthesis of loline alkaloids, potent insecticidal agents composed of a pyrrolizidine ring system and an uncommon ether bridge linking carbons 2 and 7. Lolines are structurally differentiated by the various modifications of the L-amino group and include norloline, loline, N-methylloline, N-acetylloline, N-acetylnorloline, and N-formylloline. The first committed step is the condensation of O-acetyl-L-homoserine (derived from L-aspartic acid) and L-proline, probably catalyzed by the gamma-type pyridoxal 5'-phosphate(PLP)-dependent enzyme lolC, to give the diamino diacid, NACPP. Ensuing cyclization, decarboxylation, and acetylation steps yield 1-exo-acetamidopyrrolizidine (AcAP). LolO is required for installation of the ether bridge upon the pathway intermediate, 1-exo-acetamidopyrrolizidine (AcAP). In sequential 2-oxoglutarate- and O(2)-consuming steps, lolO removes hydrogens from C2 and C7 of AcAP to form both carbon-oxygen bonds in N-acetylnorloline (NANL), the precursor to all other lolines. The enzymes lolD, lolE, lolF and lolT have also been proposed to be involved in the ether-bridge installation. Further processing of the exocyclic moiety of NANL by fungal N-acetamidase (LolN), methyltransferase (LolM), and cytochrome P450 (LolP) enzymes, with occasional involvement of a plant acetyltransferase, generates the other known lolines. LolN transforms NANL to norlonine which is monomethylated and dimethylated to respectively lonine and N-methyllonine (NML) by lolM. LolP catalyzes hydroxylation of the methyl group in N-methylloline (NML) and further oxygenation to N-formylloline (NFL). A plant acetyltransferase is responsible for the acetylation of loline to form N-acetylloline (NAL). LolA might interact with aspartate kinase to prevent feedback inhibition of its activity by these end products and thereby promote production of L-homoserine from L-aspartate. The sequence is that of L-cysteine desulfhydrase-like protein lolT2 from Epichloe uncinata (Endophyte fungus).